The chain runs to 95 residues: Aspartyl/glutamyl-tRNA(Asn/Gln) amidotransferase subunit C (95 aa).

It belongs to the GatC family. In terms of assembly, heterotrimer of A, B and C subunits.

It catalyses the reaction L-glutamyl-tRNA(Gln) + L-glutamine + ATP + H2O = L-glutaminyl-tRNA(Gln) + L-glutamate + ADP + phosphate + H(+). It carries out the reaction L-aspartyl-tRNA(Asn) + L-glutamine + ATP + H2O = L-asparaginyl-tRNA(Asn) + L-glutamate + ADP + phosphate + 2 H(+). Allows the formation of correctly charged Asn-tRNA(Asn) or Gln-tRNA(Gln) through the transamidation of misacylated Asp-tRNA(Asn) or Glu-tRNA(Gln) in organisms which lack either or both of asparaginyl-tRNA or glutaminyl-tRNA synthetases. The reaction takes place in the presence of glutamine and ATP through an activated phospho-Asp-tRNA(Asn) or phospho-Glu-tRNA(Gln). This Rhodopseudomonas palustris (strain ATCC BAA-98 / CGA009) protein is Aspartyl/glutamyl-tRNA(Asn/Gln) amidotransferase subunit C.